The following is a 708-amino-acid chain: Solute carrier family 15 member 1 (708 aa).

A helical membrane pass occupies residues 1-21; the sequence is MGMSKSHSFFGYPLSIFFIVV. Residues 22–53 are Extracellular-facing; it reads NEFCERFSYYGMRAILILYFTNFISWDDNLST. N-linked (GlcNAc...) asparagine glycosylation occurs at N50. The helical transmembrane segment at 54–74 threads the bilayer; that stretch reads AIYHTFVALCYLTPILGALIA. The Cytoplasmic segment spans residues 75 to 82; it reads DSWLGKFK. A helical transmembrane segment spans residues 83 to 103; sequence TIVSLSIVYTIGQAVTSVSSI. Residues 104–118 are Extracellular-facing; it reads NDLTDHNHDGTPDSL. The helical transmembrane segment at 119–139 threads the bilayer; sequence PVHVVLSLIGLALIALGTGGI. The Cytoplasmic segment spans residues 140–161; the sequence is KPCVSAFGGDQFEEGQEKQRNR. Residues 162-182 form a helical membrane-spanning segment; it reads FFSIFYLAINAGSLLSTIITP. Topologically, residues 183-198 are extracellular; sequence MLRVQQCGIHSKQACY. The helical transmembrane segment at 199–219 threads the bilayer; that stretch reads PLAFGVPAALMAVALIVFVLG. Topologically, residues 220 to 276 are cytoplasmic; it reads SGMYKKFKPQGNIMGKVAKCIGFAIKNRFRHRSKAFPKREHWLDWAKEKYDERLISQ. The helical transmembrane segment at 277 to 297 threads the bilayer; the sequence is IKMVTRVMFLYIPLPMFWALF. Topologically, residues 298–327 are extracellular; sequence DQQGSRWTLQATTMSGKIGALEIQPDQMQT. Residues 328-348 traverse the membrane as a helical segment; the sequence is VNAILIVIMVPIFDAVLYPLI. The Cytoplasmic segment spans residues 349 to 361; that stretch reads AKCGFNFTSLKKM. The helical transmembrane segment at 362–382 threads the bilayer; the sequence is AVGMVLASMAFVVAAIVQVEI. Residues 383 to 584 are Extracellular-facing; it reads DKTLPVFPKG…SANTVNMALQ (202 aa). An extracellular domain (ECD) region spans residues 383 to 584; it reads DKTLPVFPKG…SANTVNMALQ (202 aa). Residues N404, N408, N439, N509, N514, and N562 are each glycosylated (N-linked (GlcNAc...) asparagine). A helical transmembrane segment spans residues 585–605; that stretch reads IPQYFLLTCGEVVFSVTGLEF. Topologically, residues 606–619 are cytoplasmic; the sequence is SYSQAPSNMKSVLQ. Residues 620 to 640 form a helical membrane-spanning segment; the sequence is AGWLLTVAVGNIIVLIVAGAG. At 641-645 the chain is on the extracellular side; that stretch reads QFSKQ. The chain crosses the membrane as a helical span at residues 646-666; sequence WAEYILFAALLLVVCVIFAIM. The Cytoplasmic segment spans residues 667–708; that stretch reads ARFYTYINPAEIEAQFDEDEKKNRLEKSNPYFMSGANSQKQM.

It belongs to the major facilitator superfamily. Proton-dependent oligopeptide transporter (POT/PTR) (TC 2.A.17) family. As to quaternary structure, interacts (via extracellular domain region) with trypsin. As to expression, expressed in small intestine.

The protein localises to the apical cell membrane. It carries out the reaction a dipeptide(out) + H(+)(out) = a dipeptide(in) + H(+)(in). It catalyses the reaction an L-amino acid tripeptide(out) + H(+)(out) = an L-amino acid tripeptide(in) + H(+)(in). The catalysed reaction is L-alanyl-L-lysine(out) + H(+)(out) = L-alanyl-L-lysine(in) + H(+)(in). The enzyme catalyses L-alanyl-L-proline(out) + H(+)(out) = L-alanyl-L-proline(in) + H(+)(in). It carries out the reaction L-alanyl-L-valine(out) + H(+)(out) = L-alanyl-L-valine(in) + H(+)(in). It catalyses the reaction carnosine(out) + H(+)(out) = carnosine(in) + H(+)(in). The catalysed reaction is glycyl-L-glutamine(out) + H(+)(out) = glycyl-L-glutamine(in) + H(+)(in). The enzyme catalyses glycyl-L-leucine(out) + H(+)(out) = glycyl-L-leucine(in) + H(+)(in). It carries out the reaction glycyl-L-proline(out) + H(+)(out) = glycyl-L-proline(in) + H(+)(in). It catalyses the reaction glycyl-sarcosine(out) + H(+)(out) = glycyl-sarcosine(in) + H(+)(in). The catalysed reaction is L-leucyl-L-leucine(out) + H(+)(out) = L-leucyl-L-leucine(in) + H(+)(in). The enzyme catalyses L-leucyl-L-proline(out) + H(+)(out) = L-leucyl-L-proline(in) + H(+)(in). It carries out the reaction L-phenylalanyl-L-leucine(out) + H(+)(out) = L-phenylalanyl-L-leucine(in) + H(+)(in). It catalyses the reaction L-phenylalanyl-L-phenylalanine(out) + H(+)(out) = L-phenylalanyl-L-phenylalanine(in) + H(+)(in). The catalysed reaction is L-lysyl-glycine(out) + H(+)(out) = L-lysyl-glycine(in) + H(+)(in). The enzyme catalyses L-tyrosylglycine(out) + H(+)(out) = L-tyrosylglycine(in) + H(+)(in). It carries out the reaction L-alanyl-L-aspartate(out) + 2 H(+)(out) = L-alanyl-L-aspartate(in) + 2 H(+)(in). It catalyses the reaction L-aspartyl-glycine(out) + 2 H(+)(out) = L-aspartyl-glycine(in) + 2 H(+)(in). The catalysed reaction is glycyl-L-aspartate(out) + 2 H(+)(out) = glycyl-L-aspartate(in) + 2 H(+)(in). The enzyme catalyses glycyl-L-glutamate(out) + 2 H(+)(out) = glycyl-L-glutamate(in) + 2 H(+)(in). It carries out the reaction L-alanyl-L-leucyl-L-alanine(out) + H(+)(out) = L-alanyl-L-leucyl-L-alanine(in) + H(+)(in). It catalyses the reaction L-alanyl-L-prolylglycine(out) + H(+)(out) = L-alanyl-L-prolylglycine(in) + H(+)(in). The catalysed reaction is glycylglycyl-L-isoleucine(out) + H(+)(out) = glycylglycyl-L-isoleucine(in) + H(+)(in). The enzyme catalyses glycylglycyl-L-proline(out) + H(+)(out) = glycylglycyl-L-proline(in) + H(+)(in). It carries out the reaction L-methionyl-L-phenylalanyl-L-methionine(out) + H(+)(out) = L-methionyl-L-phenylalanyl-L-methionine(in) + H(+)(in). It catalyses the reaction N-acetyl-D-muramoyl-L-alanyl-D-isoglutamine(out) + 2 H(+)(out) = N-acetyl-D-muramoyl-L-alanyl-D-isoglutamine(in) + 2 H(+)(in). The catalysed reaction is N(alpha)-formyl-L-methionyl-L-leucyl-L-phenylalanine(out) + 2 H(+)(out) = N(alpha)-formyl-L-methionyl-L-leucyl-L-phenylalanine(in) + 2 H(+)(in). Electrogenic proton-coupled amino-acid transporter that transports oligopeptides of 2 to 4 amino acids with a preference for dipeptides. Transports neutral and monovalently charged peptides with a proton to peptide stoichiometry of 1:1 or 2:1. Primarily responsible for the absorption of dietary di- and tripeptides from the small intestinal lumen. Mediates transepithelial transport of muramyl and N-formylated bacterial dipeptides contributing to recognition of pathogenic bacteria by the mucosal immune system. This chain is Solute carrier family 15 member 1, found in Homo sapiens (Human).